We begin with the raw amino-acid sequence, 668 residues long: MKHYSIQPANLEFNAEGTPVSRDFDDVYFSNDNGLEETRYVFLGGNHLEARFPEHPHPLFVVAESGFGTGLNFLTLWQAFDQFREAHPQAQLQRLHFISFEKFPLTRADLALAHQHWPELAPWAEQLQAQWPLPLPGCHRLLLDEGRITLDLWFGDINELTSQLDDSLNQKVDAWFLDGFAPAKNPDMWTQNLFNAMARLARPGSTLATFTSAGFVRRGLQEAGFTMQKRKGFGRKREMLCGVMEQTLPLPCSTPWFNRTGSNKQEAAIIGGGIASALLSLALLRRGWQVTLYCADEAPALGASGNRQGALYPLLSKHDEALNRFFSNAFTFARRFYDLLPVKFDHDWCGVTQLGWDEKSQHKIAQMLSMDLPAELAVAVEANAVEQITGVATNCSGITYPQGGWLCPAELTRNVLKLAQQQGLQIHYQYQLQDLSRKDDGWLLNFAGDQQATHSVVVLANGHQISRFSQTSSLPVYSVAGQVSHIPTTPELAELKQVLCYDGYLTPQNTANQHHCIGASYHRGSEETAYSDEDQQQNRQRLIDCFPHAQWAKEVDVSGKEARCGVRCATRDHLPMVGNVPDYDATLVEYASLAEKKDEAVSAPVYDDLFMFAALGSRGLCSAPLCAEILAAQMSEEPIPMDASTLAALNPNRLWVRKLLKGKAVKAG.

The segment at 1–245 is tRNA (mnm(5)s(2)U34)-methyltransferase; that stretch reads MKHYSIQPAN…KREMLCGVME (245 aa). Residues 270–668 form an FAD-dependent cmnm(5)s(2)U34 oxidoreductase region; it reads IGGGIASALL…LLKGKAVKAG (399 aa).

In the N-terminal section; belongs to the methyltransferase superfamily. tRNA (mnm(5)s(2)U34)-methyltransferase family. This sequence in the C-terminal section; belongs to the DAO family. FAD is required as a cofactor.

The protein localises to the cytoplasm. It catalyses the reaction 5-aminomethyl-2-thiouridine(34) in tRNA + S-adenosyl-L-methionine = 5-methylaminomethyl-2-thiouridine(34) in tRNA + S-adenosyl-L-homocysteine + H(+). Catalyzes the last two steps in the biosynthesis of 5-methylaminomethyl-2-thiouridine (mnm(5)s(2)U) at the wobble position (U34) in tRNA. Catalyzes the FAD-dependent demodification of cmnm(5)s(2)U34 to nm(5)s(2)U34, followed by the transfer of a methyl group from S-adenosyl-L-methionine to nm(5)s(2)U34, to form mnm(5)s(2)U34. The chain is tRNA 5-methylaminomethyl-2-thiouridine biosynthesis bifunctional protein MnmC from Escherichia coli (strain UTI89 / UPEC).